Reading from the N-terminus, the 122-residue chain is Large ribosomal subunit protein uL14 (122 aa).

This sequence belongs to the universal ribosomal protein uL14 family. As to quaternary structure, part of the 50S ribosomal subunit. Forms a cluster with proteins L3 and L19. In the 70S ribosome, L14 and L19 interact and together make contacts with the 16S rRNA in bridges B5 and B8.

Functionally, binds to 23S rRNA. Forms part of two intersubunit bridges in the 70S ribosome. The sequence is that of Large ribosomal subunit protein uL14 from Bdellovibrio bacteriovorus (strain ATCC 15356 / DSM 50701 / NCIMB 9529 / HD100).